Here is a 73-residue protein sequence, read N- to C-terminus: Ocellatin-PT6 (73 aa).

A signal peptide spans 1-22 (MAFLKKSLFLVLFLGLVSLSIC). The propeptide occupies 23–39 (DEEKRQDEDDDDDDDEE).

As to expression, expressed by the skin glands.

It is found in the secreted. Has antibacterial activity against Gram-negative bacterium E.coli ATCC 25922 (MIC=120 uM) but not against S.pneumoniae ATCC 700603, S.choleraesuis ATCC 14028 or against Gram-positive bacterium S.aureus ATCC 29313. Shows no hemolytic activity and no cytotoxicity. The polypeptide is Ocellatin-PT6 (Leptodactylus pustulatus (Ceara white-lipped frog)).